The primary structure comprises 195 residues: Ribosome maturation factor RimM (195 aa).

The PRC barrel domain occupies 101-191 (ADEWYPKDLI…YLTLDPPGGL (91 aa)).

The protein belongs to the RimM family. In terms of assembly, binds ribosomal protein uS19.

The protein resides in the cytoplasm. Its function is as follows. An accessory protein needed during the final step in the assembly of 30S ribosomal subunit, possibly for assembly of the head region. Essential for efficient processing of 16S rRNA. May be needed both before and after RbfA during the maturation of 16S rRNA. It has affinity for free ribosomal 30S subunits but not for 70S ribosomes. This is Ribosome maturation factor RimM from Bifidobacterium adolescentis (strain ATCC 15703 / DSM 20083 / NCTC 11814 / E194a).